The sequence spans 502 residues: Hippocampus abundant transcript-like protein 1 (502 aa).

The span at 1–12 (MNAEPPEEKAAS) shows a compositional bias: basic and acidic residues. The interval 1–27 (MNAEPPEEKAASEAEAGAMPEKRAGSR) is disordered. Topologically, residues 1-46 (MNAEPPEEKAASEAEAGAMPEKRAGSRAAGGNSLQGFGRPSVYHAA) are extracellular. Residues 47-67 (IVIFLEFFAWGLLTTSMLTVL) traverse the membrane as a helical segment. Over 68–79 (HETFPQHTFLMN) the chain is Cytoplasmic. A helical membrane pass occupies residues 80–100 (GLIQGVKGLLSFLSAPLIGAL). Topologically, residues 101-108 (SDVWGRKP) are extracellular. The helical transmembrane segment at 109-129 (FLLGTVFFTCFPIPLMRISPW) threads the bilayer. At 130 to 131 (WY) the chain is on the cytoplasmic side. Residues 132–152 (FAMISISGVFSVTFSVIFAYV) form a helical membrane-spanning segment. Topologically, residues 153–165 (ADVTQEHERSTAY) are extracellular. The chain crosses the membrane as a helical span at residues 166–186 (GWVSATFAASLVSSPAIGAYL). Residues 187-193 (SASYGDS) are Cytoplasmic-facing. A helical membrane pass occupies residues 194–214 (LVVLVATVVALLDICFILLAV). Over 215–248 (PESLPEKMRPLSWGARISWKQADPFASLKKVGKD) the chain is Extracellular. Residues 249–269 (STILLICITVFLSYLPEAGQY) traverse the membrane as a helical segment. At 270–278 (SSFFLYLRQ) the chain is on the cytoplasmic side. The helical transmembrane segment at 279 to 299 (VIGFGSIKIAAFIAMVGILSI) threads the bilayer. Over 300–316 (VAQTVFLTSLMRSLGNK) the chain is Extracellular. Residues 317 to 337 (NTVLLGLGFQMFQLAWYGFGS) traverse the membrane as a helical segment. Position 338 (Q338) is a topological domain, cytoplasmic. The chain crosses the membrane as a helical span at residues 339–359 (AWMMWAAGIVAAVSSITFPAV). Over 360 to 384 (STLVSQNADSNQQGVAQGIITGIRG) the chain is Extracellular. Residues 385-405 (LCNGLGPALYGFIFYMFHVEL) traverse the membrane as a helical segment. At 406–425 (TELEPELISNNAALQGAVIP) the chain is on the cytoplasmic side. Residues 426 to 446 (GPPFLFGACIVFMSFLVAVFI) form a helical membrane-spanning segment. Topologically, residues 447–502 (PEYSKGGIQKHSNSISGSLANTPERGSDEDIEPLLQDSSIWELSSLEEPGHQCTEL) are extracellular.

It belongs to the major facilitator superfamily.

The protein resides in the membrane. In Bos taurus (Bovine), this protein is Hippocampus abundant transcript-like protein 1.